The sequence spans 876 residues: Alanine--tRNA ligase (876 aa).

Residues His565, His569, Cys667, and His671 each contribute to the Zn(2+) site.

This sequence belongs to the class-II aminoacyl-tRNA synthetase family. The cofactor is Zn(2+).

Its subcellular location is the cytoplasm. The enzyme catalyses tRNA(Ala) + L-alanine + ATP = L-alanyl-tRNA(Ala) + AMP + diphosphate. Its function is as follows. Catalyzes the attachment of alanine to tRNA(Ala) in a two-step reaction: alanine is first activated by ATP to form Ala-AMP and then transferred to the acceptor end of tRNA(Ala). Also edits incorrectly charged Ser-tRNA(Ala) and Gly-tRNA(Ala) via its editing domain. The protein is Alanine--tRNA ligase of Staphylococcus aureus (strain Mu3 / ATCC 700698).